Reading from the N-terminus, the 428-residue chain is Probable RNase MJ4 (428 aa).

Zn(2+) is bound by residues histidine 57, histidine 59, aspartate 61, histidine 62, histidine 143, aspartate 165, and histidine 397.

It belongs to the metallo-beta-lactamase superfamily. RNA-metabolizing metallo-beta-lactamase-like family. Zn(2+) serves as cofactor.

Probably an RNase. In Methanocaldococcus jannaschii (strain ATCC 43067 / DSM 2661 / JAL-1 / JCM 10045 / NBRC 100440) (Methanococcus jannaschii), this protein is Probable RNase MJ4.